Consider the following 35-residue polypeptide: Photosystem II reaction center protein T (35 aa).

A helical transmembrane segment spans residues alanine 3–phenylalanine 23.

The protein belongs to the PsbT family. In terms of assembly, PSII is composed of 1 copy each of membrane proteins PsbA, PsbB, PsbC, PsbD, PsbE, PsbF, PsbH, PsbI, PsbJ, PsbK, PsbL, PsbM, PsbT, PsbY, PsbZ, Psb30/Ycf12, at least 3 peripheral proteins of the oxygen-evolving complex and a large number of cofactors. It forms dimeric complexes.

It is found in the plastid. The protein resides in the chloroplast thylakoid membrane. Found at the monomer-monomer interface of the photosystem II (PS II) dimer, plays a role in assembly and dimerization of PSII. PSII is a light-driven water plastoquinone oxidoreductase, using light energy to abstract electrons from H(2)O, generating a proton gradient subsequently used for ATP formation. This Cabomba caroliniana (Carolina fanwort) protein is Photosystem II reaction center protein T.